We begin with the raw amino-acid sequence, 730 residues long: Elongation factor 2 (730 aa).

The region spanning 19 to 229 is the tr-type G domain; the sequence is LMIRNIGIVA…GVSFSEVFNY (211 aa). GTP is bound by residues 28–35, 94–98, and 148–151; these read AHIDHGKT, DTPGH, and NKVD. His-596 bears the Diphthamide mark.

It belongs to the TRAFAC class translation factor GTPase superfamily. Classic translation factor GTPase family. EF-G/EF-2 subfamily.

It localises to the cytoplasm. Functionally, catalyzes the GTP-dependent ribosomal translocation step during translation elongation. During this step, the ribosome changes from the pre-translocational (PRE) to the post-translocational (POST) state as the newly formed A-site-bound peptidyl-tRNA and P-site-bound deacylated tRNA move to the P and E sites, respectively. Catalyzes the coordinated movement of the two tRNA molecules, the mRNA and conformational changes in the ribosome. The protein is Elongation factor 2 (fusA) of Methanococcoides burtonii (strain DSM 6242 / NBRC 107633 / OCM 468 / ACE-M).